A 495-amino-acid polypeptide reads, in one-letter code: uncharacterized protein (495 aa).

It is found in the cytoplasm. The protein resides in the nucleus. This is an uncharacterized protein from Saccharomyces cerevisiae (strain ATCC 204508 / S288c) (Baker's yeast).